The chain runs to 189 residues: Protein GrpE (189 aa).

The interval 1–21 (MADEQNLDNQNPETPEQSQAD) is disordered. The segment covering 7 to 20 (LDNQNPETPEQSQA) has biased composition (polar residues).

The protein belongs to the GrpE family. In terms of assembly, homodimer.

It localises to the cytoplasm. Participates actively in the response to hyperosmotic and heat shock by preventing the aggregation of stress-denatured proteins, in association with DnaK and GrpE. It is the nucleotide exchange factor for DnaK and may function as a thermosensor. Unfolded proteins bind initially to DnaJ; upon interaction with the DnaJ-bound protein, DnaK hydrolyzes its bound ATP, resulting in the formation of a stable complex. GrpE releases ADP from DnaK; ATP binding to DnaK triggers the release of the substrate protein, thus completing the reaction cycle. Several rounds of ATP-dependent interactions between DnaJ, DnaK and GrpE are required for fully efficient folding. The chain is Protein GrpE from Stutzerimonas stutzeri (strain A1501) (Pseudomonas stutzeri).